The following is a 316-amino-acid chain: Phospho-N-acetylmuramoyl-pentapeptide-transferase (316 aa).

A run of 10 helical transmembrane segments spans residues 5–25 (IILATVVAFVLSLASGPLFIP), 49–69 (GTPTMGGIMFITATVISTLIF), 76–96 (LAILLLGFLGYGLIGFADDFL), 116–136 (FLLAIIISYFAQEYVGTEVIF), 141–161 (TTIDLGNFYIPFIVFVIVGTV), 172–192 (GLAAGVSFIVMAFFTMTALFL), 195–212 (ITYGAFSAALTGGLLGFL), 221–241 (IFMGDTGSLAIGGAIATAAVL), 244–264 (LPLILPLIGIIYVAEAFSVII), and 296–316 (VVYAFWIVTLIAMFLSFYSLS).

It belongs to the glycosyltransferase 4 family. MraY subfamily. Requires Mg(2+) as cofactor.

It localises to the cell membrane. The catalysed reaction is UDP-N-acetyl-alpha-D-muramoyl-L-alanyl-gamma-D-glutamyl-meso-2,6-diaminopimeloyl-D-alanyl-D-alanine + di-trans,octa-cis-undecaprenyl phosphate = di-trans,octa-cis-undecaprenyl diphospho-N-acetyl-alpha-D-muramoyl-L-alanyl-D-glutamyl-meso-2,6-diaminopimeloyl-D-alanyl-D-alanine + UMP. It functions in the pathway cell wall biogenesis; peptidoglycan biosynthesis. Catalyzes the initial step of the lipid cycle reactions in the biosynthesis of the cell wall peptidoglycan: transfers peptidoglycan precursor phospho-MurNAc-pentapeptide from UDP-MurNAc-pentapeptide onto the lipid carrier undecaprenyl phosphate, yielding undecaprenyl-pyrophosphoryl-MurNAc-pentapeptide, known as lipid I. This chain is Phospho-N-acetylmuramoyl-pentapeptide-transferase, found in Thermoanaerobacter pseudethanolicus (strain ATCC 33223 / 39E) (Clostridium thermohydrosulfuricum).